The primary structure comprises 127 residues: UPF0102 protein Mmwyl1_2395 (127 aa).

This sequence belongs to the UPF0102 family.

In Marinomonas sp. (strain MWYL1), this protein is UPF0102 protein Mmwyl1_2395.